Here is a 308-residue protein sequence, read N- to C-terminus: Ribonuclease Z (308 aa).

The Zn(2+) site is built by His-61, His-63, Asp-65, His-66, His-139, Asp-210, and His-268. Asp-65 serves as the catalytic Proton acceptor.

The protein belongs to the RNase Z family. As to quaternary structure, homodimer. The cofactor is Zn(2+).

The enzyme catalyses Endonucleolytic cleavage of RNA, removing extra 3' nucleotides from tRNA precursor, generating 3' termini of tRNAs. A 3'-hydroxy group is left at the tRNA terminus and a 5'-phosphoryl group is left at the trailer molecule.. Functionally, zinc phosphodiesterase, which displays some tRNA 3'-processing endonuclease activity. Probably involved in tRNA maturation, by removing a 3'-trailer from precursor tRNA. The polypeptide is Ribonuclease Z (Halobacterium salinarum (strain ATCC 700922 / JCM 11081 / NRC-1) (Halobacterium halobium)).